A 349-amino-acid polypeptide reads, in one-letter code: Twinfilin-2 (349 aa).

Alanine 2 is subject to N-acetylalanine. 2 consecutive ADF-H domains span residues 4 to 139 and 177 to 313; these read QTGI…KHLS and GLAF…DEVH. An N6-acetyllysine modification is found at lysine 14. Tyrosine 309 carries the phosphotyrosine modification. The tract at residues 322–349 is disordered; sequence AFAKPKGPGGKRGHKRLIRGPGENGDDS. The span at 330–339 shows a compositional bias: basic residues; sequence GGKRGHKRLI. Phosphoserine is present on serine 349.

It belongs to the actin-binding proteins ADF family. Twinfilin subfamily. As to quaternary structure, interacts with G-actin; ADP-actin form and capping protein (CP). May also be able to interact with TWF1 and phosphoinositides, PI(4,5)P2. When bound to PI(4,5)P2, it is down-regulated. Interacts with MYO7A. Post-translationally, in vitro, phosphorylated by PRKCZ, CK2 and SRC. As to expression, ubiquitously expressed (at protein level).

The protein resides in the cytoplasm. It localises to the cytoskeleton. Its subcellular location is the perinuclear region. The protein localises to the cell projection. It is found in the stereocilium. In terms of biological role, actin-binding protein involved in motile and morphological processes. Inhibits actin polymerization, likely by sequestering G-actin. By capping the barbed ends of filaments, it also regulates motility. Seems to play an important role in clathrin-mediated endocytosis and distribution of endocytic organelles. May play a role in regulating the mature length of the middle and short rows of stereocilia. This Homo sapiens (Human) protein is Twinfilin-2 (TWF2).